An 89-amino-acid chain; its full sequence is Small ribosomal subunit protein uS15 (89 aa).

Belongs to the universal ribosomal protein uS15 family. Part of the 30S ribosomal subunit. Forms a bridge to the 50S subunit in the 70S ribosome, contacting the 23S rRNA.

Functionally, one of the primary rRNA binding proteins, it binds directly to 16S rRNA where it helps nucleate assembly of the platform of the 30S subunit by binding and bridging several RNA helices of the 16S rRNA. Its function is as follows. Forms an intersubunit bridge (bridge B4) with the 23S rRNA of the 50S subunit in the ribosome. This Escherichia coli O157:H7 protein is Small ribosomal subunit protein uS15.